Consider the following 644-residue polypeptide: Macrolide export ATP-binding/permease protein MacB (644 aa).

The Cytoplasmic segment spans residues 1–268 (MNIIEIKQLN…SAIVAHKMRS (268 aa)). The ABC transporter domain maps to 4–242 (IEIKQLNRYF…VKNPSVFKGR (239 aa)). 40 to 47 (GQSGSGKS) is an ATP binding site. Residues 269 to 289 (LLTMLGIIIGITSVVSVVALG) traverse the membrane as a helical segment. Residues 290-523 (NGSQQKILEN…TGTMKLLISS (234 aa)) lie on the Periplasmic side of the membrane. A helical membrane pass occupies residues 524–544 (IAFISLIVGGIGVMNIMLVSV). Over 545-573 (TERTKEIGVRMAIGARQINILQQFLIEAV) the chain is Cytoplasmic. A helical transmembrane segment spans residues 574–594 (LICLIGGVAGILLSVLIGVLF). Topologically, residues 595–607 (NSFITDFSMDFST) are periplasmic. A helical membrane pass occupies residues 608 to 628 (ASIVTAVLFSTLIGVLFGYMP). At 629 to 644 (AKKAAELNPITALAQE) the chain is on the cytoplasmic side.

This sequence belongs to the ABC transporter superfamily. Macrolide exporter (TC 3.A.1.122) family. Homodimer. Part of the tripartite efflux system MacAB-TdeA, which is composed of an inner membrane transporter, MacB, a periplasmic membrane fusion protein, MacA, and an outer membrane component, TdeA. The complex forms a large protein conduit and can translocate molecules across both the inner and outer membranes. Interacts with MacA.

It localises to the cell inner membrane. Functionally, part of the tripartite efflux system MacAB-TdeA. MacB is a non-canonical ABC transporter that contains transmembrane domains (TMD), which form a pore in the inner membrane, and an ATP-binding domain (NBD), which is responsible for energy generation. Confers resistance against macrolides. This Aggregatibacter actinomycetemcomitans (Actinobacillus actinomycetemcomitans) protein is Macrolide export ATP-binding/permease protein MacB.